Consider the following 244-residue polypeptide: Small ribosomal subunit protein uS2m (244 aa).

This sequence belongs to the universal ribosomal protein uS2 family.

It is found in the mitochondrion. This Dictyostelium discoideum (Social amoeba) protein is Small ribosomal subunit protein uS2m (mrps2).